Reading from the N-terminus, the 169-residue chain is Centrosomal protein 20 (169 aa).

The necessary and sufficient for homooligomerization and localization to centrosomes and pericentriolar satellites stretch occupies residues 1–104 (MATVGDLKAV…VVEDLNSQSV (104 aa)). A LisH domain is found at 49–81 (ENLLINELIREYLAFNKYSYTSSVLTAETGLSE). The tract at residues 135-169 (TFRNIPRGRNTKDTHSGPVQLTQTSTEDWHQRRHR) is disordered. Polar residues predominate over residues 151-160 (GPVQLTQTST).

This sequence belongs to the CEP43 family. Homooligomer; probably required for localization to centrosomes.

It is found in the cell projection. Its subcellular location is the cilium. The protein localises to the cytoplasm. The protein resides in the cytoskeleton. It localises to the cilium basal body. It is found in the microtubule organizing center. Its subcellular location is the centrosome. The protein localises to the cytoplasmic granule. The protein resides in the centriolar satellite. Its function is as follows. Involved in the biogenesis of cilia. Required for the recruitment of PLK1 to centrosomes and S phase progression. The protein is Centrosomal protein 20 (Cep20) of Xenopus laevis (African clawed frog).